We begin with the raw amino-acid sequence, 158 residues long: Transcriptional regulator MraZ (158 aa).

2 SpoVT-AbrB domains span residues 5-52 (IYET…TFSS) and 91-134 (AVEC…SQAE).

The protein belongs to the MraZ family. Forms oligomers.

The protein resides in the cytoplasm. It localises to the nucleoid. This Geobacter sulfurreducens (strain ATCC 51573 / DSM 12127 / PCA) protein is Transcriptional regulator MraZ.